We begin with the raw amino-acid sequence, 627 residues long: DNA mismatch repair protein MutL (627 aa).

Residues 354–364 (DEKPPEKKVPE) are compositionally biased toward basic and acidic residues. The interval 354 to 374 (DEKPPEKKVPEKSTAPSYSPM) is disordered.

Belongs to the DNA mismatch repair MutL/HexB family.

Functionally, this protein is involved in the repair of mismatches in DNA. It is required for dam-dependent methyl-directed DNA mismatch repair. May act as a 'molecular matchmaker', a protein that promotes the formation of a stable complex between two or more DNA-binding proteins in an ATP-dependent manner without itself being part of a final effector complex. Overexpression of mutSL partially suppresses the high spontaneous mutation frequency of a ytkD/mutM/mutY triple disruption which lacks the system required to prevent damage by oxidized guanine (8-oxo-dGTP). This suggests that MutSL also functions to repair mismatches due to oxidative stress in both growing and stationary phase cells. The protein is DNA mismatch repair protein MutL of Bacillus subtilis (strain 168).